We begin with the raw amino-acid sequence, 43 residues long: Protein PsbN (43 aa).

The chain crosses the membrane as a helical span at residues threonine 5–phenylalanine 27.

Belongs to the PsbN family.

It is found in the plastid. Its subcellular location is the chloroplast thylakoid membrane. Functionally, may play a role in photosystem I and II biogenesis. This is Protein PsbN from Chlorokybus atmophyticus (Soil alga).